Here is a 143-residue protein sequence, read N- to C-terminus: Small ribosomal subunit protein uS9 (143 aa).

The segment at 124–143 (PEPKKFGGKGARARFQKSYR) is disordered. A compositionally biased stretch (basic residues) spans 134-143 (ARARFQKSYR).

Belongs to the universal ribosomal protein uS9 family.

This is Small ribosomal subunit protein uS9 (RPS16) from Candida glabrata (strain ATCC 2001 / BCRC 20586 / JCM 3761 / NBRC 0622 / NRRL Y-65 / CBS 138) (Yeast).